A 176-amino-acid polypeptide reads, in one-letter code: Transcription factor 21 (176 aa).

A disordered region spans residues 1 to 84; it reads MSTGSISDVD…QVQRNAANAR (84 aa). The span at 31–44 shows a compositional bias: polar residues; sequence GTSNESTEDSSNCE. The region spanning 76–128 is the bHLH domain; that stretch reads VQRNAANARERARMRVLSKAFSRLKTTLPWVPPDTKLSKLDTLRLASSYIAHL.

Efficient DNA binding requires dimerization with another bHLH protein. As to expression, expressed in the cranial paraxial mesoderm from 20 hpf and subsequently becomes restricted to the pharyngeal mesoderm that will form the muscle. Expression in the proepicardial organ is first seen at 40hpf in a cluster of cells between the myocardium and yolk. Also expressed in the developing arches. Expression begins to surround the heart by day 3 of development, and by 96 hpf, expression is restricted to the outer epicardial layer surrounding the myocardium.

The protein localises to the nucleus. Its function is as follows. Involved in epithelial-mesenchymal interactions in kidney and lung morphogenesis that include epithelial differentiation and branching morphogenesis. This Danio rerio (Zebrafish) protein is Transcription factor 21.